Consider the following 29-residue polypeptide: MDYETDTDTELVTETLVEEVSIDGMCGVY.

The protein belongs to the mycofactocin precursor peptide family. In terms of processing, the post-translational modifications that lead to mycofactocin involve oxidative decarboxylation of the C-terminal tyrosine residue catalyzed by MftC, introduction of a tyramine-valine cross-link, removal of the modified C-terminal dipeptide by MftE. The released dipeptide then undergoes oxidative deamination by MftD, glycosylation by MftF and methylation by an unknown enzyme.

In terms of biological role, precursor peptide that leads to mycofactocin (MFT) after extensive post-translational modifications by enzymes encoded by adjacent genes. Mycofactocin acts as a redox cofactor of nicotinamide-dependent oxidoreductases encoded in the same locus. In Mycobacterium tuberculosis (strain ATCC 25618 / H37Rv), this protein is Mycofactocin precursor peptide.